The following is a 294-amino-acid chain: NAD kinase (294 aa).

Residue Asp-73 is the Proton acceptor of the active site. NAD(+) is bound by residues 73-74 (DG), 147-148 (NE), His-158, Arg-175, Asp-177, 188-193 (TAYSLS), and Gln-249.

The protein belongs to the NAD kinase family. Requires a divalent metal cation as cofactor.

The protein resides in the cytoplasm. The catalysed reaction is NAD(+) + ATP = ADP + NADP(+) + H(+). Functionally, involved in the regulation of the intracellular balance of NAD and NADP, and is a key enzyme in the biosynthesis of NADP. Catalyzes specifically the phosphorylation on 2'-hydroxyl of the adenosine moiety of NAD to yield NADP. The polypeptide is NAD kinase (Aeromonas salmonicida (strain A449)).